Here is a 172-residue protein sequence, read N- to C-terminus: 3-hydroxydecanoyl-[acyl-carrier-protein] dehydratase (172 aa).

His-71 is an active-site residue.

Belongs to the thioester dehydratase family. FabA subfamily. As to quaternary structure, homodimer.

Its subcellular location is the cytoplasm. It carries out the reaction a (3R)-hydroxyacyl-[ACP] = a (2E)-enoyl-[ACP] + H2O. The enzyme catalyses (3R)-hydroxydecanoyl-[ACP] = (2E)-decenoyl-[ACP] + H2O. It catalyses the reaction (2E)-decenoyl-[ACP] = (3Z)-decenoyl-[ACP]. It functions in the pathway lipid metabolism; fatty acid biosynthesis. In terms of biological role, necessary for the introduction of cis unsaturation into fatty acids. Catalyzes the dehydration of (3R)-3-hydroxydecanoyl-ACP to E-(2)-decenoyl-ACP and then its isomerization to Z-(3)-decenoyl-ACP. Can catalyze the dehydratase reaction for beta-hydroxyacyl-ACPs with saturated chain lengths up to 16:0, being most active on intermediate chain length. This Yersinia pseudotuberculosis serotype O:1b (strain IP 31758) protein is 3-hydroxydecanoyl-[acyl-carrier-protein] dehydratase.